Reading from the N-terminus, the 514-residue chain is 2,3-bisphosphoglycerate-independent phosphoglycerate mutase (514 aa).

Positions 14 and 64 each coordinate Mn(2+). Ser-64 (phosphoserine intermediate) is an active-site residue. Residues His-125, 155–156 (RD), Arg-187, Arg-193, 263–266 (RADR), and Lys-336 contribute to the substrate site. Positions 403, 407, 444, 445, and 463 each coordinate Mn(2+).

The protein belongs to the BPG-independent phosphoglycerate mutase family. In terms of assembly, monomer. The cofactor is Mn(2+).

The catalysed reaction is (2R)-2-phosphoglycerate = (2R)-3-phosphoglycerate. Its pathway is carbohydrate degradation; glycolysis; pyruvate from D-glyceraldehyde 3-phosphate: step 3/5. Its function is as follows. Catalyzes the interconversion of 2-phosphoglycerate and 3-phosphoglycerate. This Salmonella paratyphi B (strain ATCC BAA-1250 / SPB7) protein is 2,3-bisphosphoglycerate-independent phosphoglycerate mutase.